The chain runs to 296 residues: Small ribosomal subunit biogenesis GTPase RsgA (296 aa).

The 162-residue stretch at 63–224 (RNQLVRPPVA…IADTPGFSSY (162 aa)) folds into the CP-type G domain. Residues 112–115 (SKTD) and 167–175 (GQTGAGKST) contribute to the GTP site. Residues Cys-248, Cys-253, His-255, and Cys-261 each contribute to the Zn(2+) site.

It belongs to the TRAFAC class YlqF/YawG GTPase family. RsgA subfamily. Monomer. Associates with 30S ribosomal subunit, binds 16S rRNA. Zn(2+) serves as cofactor.

Its subcellular location is the cytoplasm. One of several proteins that assist in the late maturation steps of the functional core of the 30S ribosomal subunit. Helps release RbfA from mature subunits. May play a role in the assembly of ribosomal proteins into the subunit. Circularly permuted GTPase that catalyzes slow GTP hydrolysis, GTPase activity is stimulated by the 30S ribosomal subunit. The polypeptide is Small ribosomal subunit biogenesis GTPase RsgA (Limosilactobacillus reuteri (strain DSM 20016) (Lactobacillus reuteri)).